The primary structure comprises 365 residues: Protein dbl-1 (365 aa).

Residues 1 to 42 (MNDSVRTTTTISSTKSLVHSFQLSAILHLFLLISFTPMSAAA) form the signal peptide. The propeptide occupies 43–244 (DQHASHATRR…KRSAQTGNSE (202 aa)). Asparagine 110, asparagine 143, and asparagine 167 each carry an N-linked (GlcNAc...) asparagine glycan. The tract at residues 231–259 (SVRRKRSAQTGNSERKNRKKGRKHHNTEA) is disordered. Residues 246 to 255 (KNRKKGRKHH) are compositionally biased toward basic residues. 3 cysteine pairs are disulfide-bonded: cysteine 264/cysteine 330, cysteine 293/cysteine 362, and cysteine 297/cysteine 364. Asparagine 306 carries an N-linked (GlcNAc...) asparagine glycan.

The protein belongs to the TGF-beta family. Homodimer; disulfide-linked. Interacts with drag-1. As to expression, expressed in embryos just prior to hatching and remains constant in most cells throughout the larval and adult stages. Expressed by AVA command interneurons.

It is found in the secreted. Its function is as follows. Ligand for the serine/threonine-protein kinase receptor type-1 sma-6 which activates a TGF-beta-like signaling pathway. Multifunctional protein that is involved in body size, male ectodermal patterning, innate immunity, lipid metabolism and neural plasticity. Dose-dependent regulator of body size, probably influencing the sizes of some or all cells rather than their number. Plays a role in patterning of male-specific genital sensilla (simple sense organs), known as rays, and mating-associated structures, spicules. Plays a protective role in response to infection by the Gram-negative bacterium S.marcescens, by activating expression of genes involved in innate immunity. Regulator of lipid homeostasis, acting non cell-autonomously in the hypodermis; partly dependent on the Insulin/IGF-1-like signaling (IIS) mediated pathway. Required for aversive olfactory learning of pathogenic bacteria in adults. Involved in gland cell morphology, possibly via activation of a Smad-independent TGF-beta signaling pathway. Required to oppose the autoregulation of expression of Runt-related transcription factor rnt-1. In Caenorhabditis elegans, this protein is Protein dbl-1.